A 492-amino-acid chain; its full sequence is MSILLKAAGLLFLGMLQAFPKDRPLDTTCTGDLSYYPGEAARNCCYQCPSGLSPTQPCPQGPATARSSVILTTTNEDRKCTACVTCLPGLVEKAPCSGNSPRICECQPGMYCSTPAVNSCARCSEKTVVKFPDTAEKNTICDLPSPGSGPNGSNPDDCKTLTSHTTPQAIPTLESPANDSVRSLLPKQVTDFVNEGATKLVKVPESSSSKASMPSPDPGNAEMNMTLKLPPPGTVPDISTSENSMEPASTASTLSLLVDARTSSRMQPTSPLSTGTPFLDPGSMLFWVAMVVLLVGSASFLLCYWKACRRRFQRKFHLNYLQQTFQPKMEQVDSCPTEKLTQLQRSGSVTDSSAGHTLSPLSPPAVETGASVGTACLETLPLLDDSITGNSFAPREPPEPRVSTEHTNNRIEKIYIMKADTVIVGSVKTEVPEGRAPVGSTESELEAELEVDHTPHYPEQETEPPLGSCTEVMFSVEEGGKEDHEPTTVSEK.

Residues 1-18 (MSILLKAAGLLFLGMLQA) form the signal peptide. Topologically, residues 19-282 (FPKDRPLDTT…STGTPFLDPG (264 aa)) are extracellular. TNFR-Cys repeat units lie at residues 57-104 (PCPQ…PRIC) and 105-141 (ECQP…NTIC). Intrachain disulfides connect Cys-58–Cys-80, Cys-83–Cys-96, Cys-86–Cys-104, and Cys-123–Cys-141. Residues 141–178 (CDLPSPGSGPNGSNPDDCKTLTSHTTPQAIPTLESPAN) are disordered. Over residues 144–155 (PSPGSGPNGSNP) the composition is skewed to low complexity. N-linked (GlcNAc...) asparagine glycosylation is found at Asn-151, Asn-178, and Asn-224. The segment covering 160 to 178 (TLTSHTTPQAIPTLESPAN) has biased composition (polar residues). The helical transmembrane segment at 283-303 (SMLFWVAMVVLLVGSASFLLC) threads the bilayer. Residues 304-492 (YWKACRRRFQ…DHEPTTVSEK (189 aa)) are Cytoplasmic-facing. Phosphoserine is present on residues Ser-334 and Ser-348. Disordered regions lie at residues 336-366 (PTEK…PPAV) and 432-492 (PEGR…VSEK). The span at 339-360 (KLTQLQRSGSVTDSSAGHTLSP) shows a compositional bias: polar residues. Composition is skewed to basic and acidic residues over residues 450 to 459 (EVDHTPHYPE) and 478 to 492 (EGGK…VSEK).

Belongs to the TNFR8 family. Interacts with TRAF1, TRAF2, TRAF3 and TRAF5. As to expression, very low level of expression. Detected in spleen, thymus and lung. Highly expressed in HTLV-1 infected T-cell lines.

The protein resides in the cell membrane. In terms of biological role, receptor for TNFSF8/CD30L. May play a role in the regulation of cellular growth and transformation of activated lymphoblasts. Regulates gene expression through activation of NF-kappa-B. This chain is Tumor necrosis factor receptor superfamily member 8, found in Rattus norvegicus (Rat).